The chain runs to 906 residues: UPF0182 protein CA_C0010 (906 aa).

A run of 7 helical transmembrane segments spans residues 7–29, 47–69, 96–118, 153–175, 208–230, 250–272, and 279–301; these read IVTI…DFII, LAAI…WFYY, VAIV…VYWY, LYGV…YIVL, FAII…SFNL, LVFY…TSII, and IFVS…EIVQ. Residues 842-862 are compositionally biased toward low complexity; the sequence is NSSNNQSETRTETGGTSTDSS. The segment at 842–875 is disordered; sequence NSSNNQSETRTETGGTSTDSSNNKDKLKQAQDLY.

The protein belongs to the UPF0182 family.

It localises to the cell membrane. The chain is UPF0182 protein CA_C0010 from Clostridium acetobutylicum (strain ATCC 824 / DSM 792 / JCM 1419 / IAM 19013 / LMG 5710 / NBRC 13948 / NRRL B-527 / VKM B-1787 / 2291 / W).